Here is a 940-residue protein sequence, read N- to C-terminus: PTS system glucose-specific EIICBA component (940 aa).

One can recognise a PTS EIIC type-1; first part domain in the interval 1 to 284 (MQIKAQDTGQ…YAPLWYTSAG (284 aa)). Helical transmembrane passes span 43-63 (LMIP…GDAI), 83-103 (GGDV…AITF), 112-132 (FSAF…ILPF), 175-195 (VFGG…FYAI), and 209-229 (FVPI…LMIW). The tract at residues 285-478 (GSLQEIVNQQ…VNSFRVAVES (194 aa)) is unknown. One can recognise a PTS EIIC type-1; second part domain in the interval 479-630 (LNPAQYSQGK…FNLATPGRGG (152 aa)). A run of 5 helical transmembrane segments spans residues 487–507 (GKFP…ILAA), 515–535 (AASI…TEPF), 537–557 (FTFL…LAAV), 564–584 (ILGA…ILYG), and 598–618 (LVPI…YFLI). Positions 661 to 743 (QIEAGILLQA…QDIIQGKVNW (83 aa)) constitute a PTS EIIB type-1 domain. Cys683 functions as the Phosphocysteine intermediate; for EIIB activity in the catalytic mechanism. A PTS EIIA type-1 domain is found at 794-907 (DETFKQKLVG…NPITPFVVMK (114 aa)). The Tele-phosphohistidine intermediate; for EIIA activity role is filled by His847.

The protein localises to the cell membrane. The enzyme catalyses N(pros)-phospho-L-histidyl-[protein] + D-glucose(out) = D-glucose 6-phosphate(in) + L-histidyl-[protein]. Functionally, the phosphoenolpyruvate-dependent sugar phosphotransferase system (sugar PTS), a major carbohydrate active transport system, catalyzes the phosphorylation of incoming sugar substrates concomitantly with their translocation across the cell membrane. This system is involved in glucose transport. The polypeptide is PTS system glucose-specific EIICBA component (ptsG) (Mycoplasma pneumoniae (strain ATCC 29342 / M129 / Subtype 1) (Mycoplasmoides pneumoniae)).